A 630-amino-acid chain; its full sequence is tRNA uridine 5-carboxymethylaminomethyl modification enzyme MnmG (630 aa).

Residue 13-18 (GGGHAG) participates in FAD binding. 273 to 287 (GPRYCPSIEDKIHRF) contributes to the NAD(+) binding site.

It belongs to the MnmG family. In terms of assembly, homodimer. Heterotetramer of two MnmE and two MnmG subunits. FAD serves as cofactor.

The protein resides in the cytoplasm. NAD-binding protein involved in the addition of a carboxymethylaminomethyl (cmnm) group at the wobble position (U34) of certain tRNAs, forming tRNA-cmnm(5)s(2)U34. The protein is tRNA uridine 5-carboxymethylaminomethyl modification enzyme MnmG of Pseudomonas putida (strain GB-1).